Reading from the N-terminus, the 156-residue chain is MKCPFCGSMDTRVLDSRPTLDGTAIRRRRECSSCGKRFTTYERYEEAPVLVVKKDGRREKFDREKIKNGMIKACEKRPVTYEQIEEAVNRICLKLREEGSFEVETKRIGELVMEELKKLDQVAYVRLASVYRDFREVDQFLEIVKELKREKEGEEQ.

A zinc finger lies at 3–34 (CPFCGSMDTRVLDSRPTLDGTAIRRRRECSSC). One can recognise an ATP-cone domain in the interval 49–139 (VLVVKKDGRR…VYRDFREVDQ (91 aa)).

It belongs to the NrdR family. It depends on Zn(2+) as a cofactor.

Functionally, negatively regulates transcription of bacterial ribonucleotide reductase nrd genes and operons by binding to NrdR-boxes. This chain is Transcriptional repressor NrdR, found in Thermotoga maritima (strain ATCC 43589 / DSM 3109 / JCM 10099 / NBRC 100826 / MSB8).